The following is a 134-amino-acid chain: Rhoptry antigen protein (134 aa).

Disordered regions lie at residues 21 to 82 (MGPL…SNLK) and 96 to 134 (QLDK…ENEL). Residues 29-38 (KSTSAASTSD) are compositionally biased toward polar residues. Positions 39-54 (ELSGSEGPSTESTSTG) are enriched in low complexity. Positions 57–69 (GEDKTTDNTYKEM) are enriched in basic and acidic residues. Basic residues predominate over residues 102–113 (PKKKKSKRKKKR). Residues 114 to 126 (DSSSDRILLEESK) are compositionally biased toward basic and acidic residues.

The chain is Rhoptry antigen protein from Plasmodium falciparum.